Here is a 144-residue protein sequence, read N- to C-terminus: Large ribosomal subunit protein uL15 (144 aa).

A disordered region spans residues 1–51 (MKLNELKPATGSRSKRLRKGRGLSSGHGFTSGRGTKGQKAHGKTRLGFEGG). The segment covering 23-35 (LSSGHGFTSGRGT) has biased composition (gly residues).

It belongs to the universal ribosomal protein uL15 family. Part of the 50S ribosomal subunit.

Binds to the 23S rRNA. This is Large ribosomal subunit protein uL15 from Limosilactobacillus reuteri (strain DSM 20016) (Lactobacillus reuteri).